The primary structure comprises 301 residues: D-alanine--D-alanine ligase (301 aa).

The ATP-grasp domain occupies 99–294; the sequence is KCILKAANIR…FSELIDMIID (196 aa). ATP is bound at residue 126–181; it reads IEGMGYPVVVKPTHGGSSVATFIIKEEKDIKNAVTEAFKWDSEVIIEKFIKGDEIT. The Mg(2+) site is built by D248, E261, and N263.

It belongs to the D-alanine--D-alanine ligase family. Mg(2+) serves as cofactor. Mn(2+) is required as a cofactor.

The protein localises to the cytoplasm. The catalysed reaction is 2 D-alanine + ATP = D-alanyl-D-alanine + ADP + phosphate + H(+). It participates in cell wall biogenesis; peptidoglycan biosynthesis. Cell wall formation. The chain is D-alanine--D-alanine ligase from Clostridium botulinum (strain Eklund 17B / Type B).